The following is a 306-amino-acid chain: Large ribosomal subunit protein mL45 (306 aa).

Residues leucine 287–alanine 306 are disordered.

This sequence belongs to the mitochondrion-specific ribosomal protein mL45 family. In terms of assembly, component of the mitochondrial large ribosomal subunit (mt-LSU). Mature mammalian 55S mitochondrial ribosomes consist of a small (28S) and a large (39S) subunit. The 28S small subunit contains a 12S ribosomal RNA (12S mt-rRNA) and 30 different proteins. The 39S large subunit contains a 16S rRNA (16S mt-rRNA), a copy of mitochondrial valine transfer RNA (mt-tRNA(Val)), which plays an integral structural role, and 52 different proteins.

It is found in the mitochondrion. Functionally, component of the mitochondrial large ribosomal subunit (mt-LSU). Within the mitochondrial ribosomes, required to direct the nascent polypeptide toward the tunnel exit and position the exit at a distance from the membrane surface. This is Large ribosomal subunit protein mL45 from Homo sapiens (Human).